Reading from the N-terminus, the 156-residue chain is Cyanate hydratase (156 aa).

Active-site residues include Arg96, Glu99, and Ser122.

The protein belongs to the cyanase family. In terms of assembly, homodecamer composed of five homodimers.

It catalyses the reaction cyanate + hydrogencarbonate + 3 H(+) = NH4(+) + 2 CO2. Its function is as follows. Catalyzes the reaction of cyanate with bicarbonate to produce ammonia and carbon dioxide. This chain is Cyanate hydratase (cynS), found in Escherichia coli O157:H7.